Reading from the N-terminus, the 300-residue chain is 2-oxoglutarate-dependent dioxygenase DAO (300 aa).

Residues 149–252 (WPCQFRMNRY…VSIAMFLLAP (104 aa)) enclose the Fe2OG dioxygenase domain. The Fe cation site is built by His173, Asp175, and His232. Arg242 is a 2-oxoglutarate binding site.

It belongs to the iron/ascorbate-dependent oxidoreductase family. Fe(2+) serves as cofactor.

2-oxoglutarate-dependent dioxygenase essential for auxin catabolism and maintenance of auxin homeostasis in reproductive organs. Catalyzes the irreversible oxidation of indole-3-acetic acid (IAA) to the biologically inactive 2-oxoindole-3-acetic acid (OxIAA). The chain is 2-oxoglutarate-dependent dioxygenase DAO (DAO) from Oryza sativa subsp. indica (Rice).